Reading from the N-terminus, the 475-residue chain is Protein EARLY HEADING DATE 2 (475 aa).

The span at methionine 1 to asparagine 16 shows a compositional bias: polar residues. The interval methionine 1–methionine 26 is disordered. C2H2-type zinc fingers lie at residues phenylalanine 105 to histidine 127 and tyrosine 155 to histidine 185. 2 short sequence motifs (nuclear localization signal) span residues histidine 123–proline 130 and isoleucine 177–lysine 184. A C2H2-type 2; degenerate zinc finger spans residues tryptophan 190 to glycine 213. Residues cysteine 192, cysteine 195, histidine 208, cysteine 212, cysteine 219, cysteine 221, histidine 234, and cysteine 238 each coordinate Zn(2+). Residues tyrosine 217–alanine 240 form a CCHC-type 2; atypical zinc finger. An SHR-binding region spans residues arginine 227–aspartate 239.

Mostly expressed in developing leaves (more in sheaths than in blades, especially in the outer epidermal cell of immature leaves and in the region immediately beneath the meristem where internodes are visible) and panicles, and, at very low levels, around the shoot apex and in roots.

It localises to the nucleus. Transcription activator that acts as a flowering master switch in both long and short days, independently of the circadian clock. Promotes flowering upstream of HD1 by up-regulating FTL1, FTL4, FTL5, FTL6, EHD1, HD3A and RFT1. Seems to repress FTL11 expression. May recognize the consensus motif 5'-TTTGTCGTAAT-3' in target gene promoters. This chain is Protein EARLY HEADING DATE 2, found in Oryza sativa subsp. japonica (Rice).